Here is a 218-residue protein sequence, read N- to C-terminus: uncharacterized protein (218 aa).

Belongs to the HAD-like hydrolase superfamily.

The protein localises to the cytoplasm. Its subcellular location is the nucleus. This is an uncharacterized protein from Saccharomyces cerevisiae (strain ATCC 204508 / S288c) (Baker's yeast).